Reading from the N-terminus, the 207-residue chain is NADH-quinone oxidoreductase chain 5 (207 aa).

This sequence belongs to the complex I 30 kDa subunit family. In terms of assembly, NDH-1 is composed of at least 14 different subunits, Nqo1 to Nqo14. The complex has a L-shaped structure, with the hydrophobic arm (subunits Nqo7, Nqo8, Nqo10 to Nqo14) embedded in the inner membrane and the hydrophilic peripheral arm (subunits Nqo1 to Nqo6, Nqo9) protruding into the bacterial cytoplasm. The hydrophilic domain contains all the redox centers.

The protein localises to the cell inner membrane. The catalysed reaction is a quinone + NADH + 5 H(+)(in) = a quinol + NAD(+) + 4 H(+)(out). Functionally, NDH-1 shuttles electrons from NADH, via FMN and iron-sulfur (Fe-S) centers, to quinones in the respiratory chain. The immediate electron acceptor for the enzyme in this species is believed to be ubiquinone. Couples the redox reaction to proton translocation (for every two electrons transferred, four hydrogen ions are translocated across the cytoplasmic membrane), and thus conserves the redox energy in a proton gradient. In Paracoccus denitrificans, this protein is NADH-quinone oxidoreductase chain 5 (nqo5).